The following is a 180-amino-acid chain: DNA replication regulator protein HobA (180 aa).

5 residues coordinate Ca(2+): Glu17, Glu27, Glu140, Glu143, and Asn176.

As to quaternary structure, forms dimers and homotetramers. Interacts with domains I and II (residues 1-112) of DnaA. In a crystal with domains I and II of DnaA HobA forms tetramers with DnaA fragments bound at the dimer interface of the tetramer. Ca(2+) serves as cofactor.

In terms of biological role, required for DNA replication initiation. Increases binding of DnaA to oriC region. The protein is DNA replication regulator protein HobA of Helicobacter pylori (strain ATCC 700392 / 26695) (Campylobacter pylori).